A 964-amino-acid chain; its full sequence is Phosphoenolpyruvate carboxylase (964 aa).

Phosphoserine is present on serine 11. Catalysis depends on residues histidine 172 and lysine 600.

It belongs to the PEPCase type 1 family. In terms of assembly, homotetramer. Requires Mg(2+) as cofactor.

The protein resides in the cytoplasm. The catalysed reaction is oxaloacetate + phosphate = phosphoenolpyruvate + hydrogencarbonate. The protein operates within photosynthesis; C4 acid pathway. By light-reversible phosphorylation. Through the carboxylation of phosphoenolpyruvate (PEP) it forms oxaloacetate, a four-carbon dicarboxylic acid source for the tricarboxylic acid cycle. The sequence is that of Phosphoenolpyruvate carboxylase from Amaranthus hypochondriacus (Prince-of-Wales feather).